The chain runs to 156 residues: Succinate dehydrogenase assembly factor 2-B, mitochondrial (156 aa).

The N-terminal 24 residues, 1 to 24 (MLRQFIISTVGRRQPLLMILQSRL), are a transit peptide targeting the mitochondrion.

It belongs to the SDHAF2 family. Interacts with the flavoprotein subunit within the SDH catalytic dimer.

It is found in the mitochondrion matrix. Plays an essential role in the assembly of succinate dehydrogenase (SDH), an enzyme complex (also referred to as respiratory complex II) that is a component of both the tricarboxylic acid (TCA) cycle and the mitochondrial electron transport chain, and which couples the oxidation of succinate to fumarate with the reduction of ubiquinone (coenzyme Q) to ubiquinol. Required for flavinylation (covalent attachment of FAD) of the flavoprotein subunit of the SDH catalytic dimer. This is Succinate dehydrogenase assembly factor 2-B, mitochondrial from Drosophila yakuba (Fruit fly).